An 817-amino-acid polypeptide reads, in one-letter code: Dynamin-related protein 5A (817 aa).

Over residues 1-20 (MANSNTYLTTPTKTPSSRRN) the composition is skewed to polar residues. Positions 1–37 (MANSNTYLTTPTKTPSSRRNQQSQSKMQSHSKDPINA) are disordered. The Dynamin-type G domain maps to 59–346 (KLPIPEIVAI…LQKRYKEAAP (288 aa)). Residues 69 to 76 (GGQSDGKS) are G1 motif. A GTP-binding site is contributed by 69–76 (GGQSDGKS). The G2 motif stretch occupies residues 95–97 (GTR). Residues 175-178 (DTPG) form a G3 motif region. GTP-binding positions include 175 to 179 (DTPGF) and 244 to 247 (SKFD). Residues 244–247 (SKFD) are G4 motif. The tract at residues 280–283 (LPKD) is G5 motif. Disordered regions lie at residues 405 to 425 (APEQWGKTTEEERGESGIGSW) and 616 to 658 (LSDT…ETPS). Residues 618 to 629 (DTSRDEPMKDQE) are compositionally biased toward basic and acidic residues.

The protein belongs to the TRAFAC class dynamin-like GTPase superfamily. Dynamin/Fzo/YdjA family. Expressed in root and leaf meristems.

It is found in the cytoplasm. It localises to the cytoskeleton. Its subcellular location is the phragmoplast. Probable microtubule-associated force-producing protein that is targeted to the forming cell plate during cytokinesis. May play a role in cell division. This Arabidopsis thaliana (Mouse-ear cress) protein is Dynamin-related protein 5A (DRP5A).